The chain runs to 446 residues: Histidine--tRNA ligase (446 aa).

This sequence belongs to the class-II aminoacyl-tRNA synthetase family. Homodimer.

It is found in the cytoplasm. The enzyme catalyses tRNA(His) + L-histidine + ATP = L-histidyl-tRNA(His) + AMP + diphosphate + H(+). This Paraburkholderia xenovorans (strain LB400) protein is Histidine--tRNA ligase.